An 863-amino-acid polypeptide reads, in one-letter code: Dipeptidyl peptidase 9 (863 aa).

Positions 1–20 (MATTGTPTADRGDAAATDDP) are disordered. An N-acetylalanine modification is found at Ala2. Catalysis depends on charge relay system residues Ser730, Asp808, and His840. Ser730 is a binding site for Val-boroPro.

Belongs to the peptidase S9B family. DPPIV subfamily. In terms of assembly, homodimer. Forms a ternary complex with NLRP1, composed of a DPP9 homodimer, one full-length NLRP1 protein, and one cleaved C-terminus of NLRP1 (NACHT, LRR and PYD domains-containing protein 1, C-terminus). Forms a ternary complex with CARD8, composed of a DPP9 homodimer, one full-length NLRP1 protein, and one cleaved C-terminus of CARD8 (Caspase recruitment domain-containing protein 8, C-terminus). In the ternary complex, only one subunit of the DPP9 homodimer is bound to NLRP1 or CARD8. As to expression, ubiquitously expressed, with highest levels in liver, heart and muscle, and lowest levels in brain.

The protein resides in the cytoplasm. The protein localises to the cytosol. Its subcellular location is the nucleus. The catalysed reaction is Release of an N-terminal dipeptide, Xaa-Yaa-|-Zaa-, from a polypeptide, preferentially when Yaa is Pro, provided Zaa is neither Pro nor hydroxyproline.. With respect to regulation, inhibited by the serine proteinase inhibitor 4-(2-aminoethyl)benzenesulphonyl fluoride (AEBSF), and by di-isopropylfluorophosphate. Inhibited by Val-boroPro (Talabostat, PT-100), a non-selective inhibitor, which triggers pyroptosis in monocytes and macrophages. Val-boroPro inhibits activity by binding to the active site, mimicking a substrate-bound state, thereby displacing the C-terminal fragment of NLRP1, leading to activation of the NLRP1 inflammasome. In contrast, Val-boroPro does not directly displaces CARD8: it acts by promoting degradation of the N-terminal part of CARD8, leading to indirect disruption of the ternary complex. Chemical inhibition of DPP9 by Val-boroPro in HIV-1-infected cells activates the CARD8 inflammasome, triggering cell death, offering a promising strategy for the elimination of HIV-1 reservoirs in people living with HIV-1. Its function is as follows. Dipeptidyl peptidase that cleaves off N-terminal dipeptides from proteins having a Pro or Ala residue at position 2. Acts as a key inhibitor of caspase-1-dependent monocyte and macrophage pyroptosis in resting cells by preventing activation of NLRP1 and CARD8. Sequesters the cleaved C-terminal part of NLRP1 and CARD8, which respectively constitute the active part of the NLRP1 and CARD8 inflammasomes, in a ternary complex, thereby preventing their oligomerization and activation. The dipeptidyl peptidase activity is required to suppress NLRP1 and CARD8; however, neither NLRP1 nor CARD8 are bona fide substrates of DPP9, suggesting the existence of substrate(s) required for NLRP1 and CARD8 inhibition. This Homo sapiens (Human) protein is Dipeptidyl peptidase 9.